Consider the following 304-residue polypeptide: Large ribosomal subunit protein uL18 (304 aa).

The protein belongs to the universal ribosomal protein uL18 family. As to quaternary structure, component of a hexameric 5S RNP precursor complex, composed of 5S RNA, RRS1, RPF2, RPL5, RPL11 and SYO1; this complex acts as a precursor for ribosome assembly.

The protein resides in the cytoplasm. Component of the ribosome, a large ribonucleoprotein complex responsible for the synthesis of proteins in the cell. The small ribosomal subunit (SSU) binds messenger RNAs (mRNAs) and translates the encoded message by selecting cognate aminoacyl-transfer RNA (tRNA) molecules. The large subunit (LSU) contains the ribosomal catalytic site termed the peptidyl transferase center (PTC), which catalyzes the formation of peptide bonds, thereby polymerizing the amino acids delivered by tRNAs into a polypeptide chain. The nascent polypeptides leave the ribosome through a tunnel in the LSU and interact with protein factors that function in enzymatic processing, targeting, and the membrane insertion of nascent chains at the exit of the ribosomal tunnel. The chain is Large ribosomal subunit protein uL18 from Chaetomium thermophilum (strain DSM 1495 / CBS 144.50 / IMI 039719) (Thermochaetoides thermophila).